Here is a 1285-residue protein sequence, read N- to C-terminus: Nuclear pore complex protein NUP133 (1285 aa).

Disordered regions lie at residues 1-53 and 522-580; these read MFSP…PAPW and EPPE…QTAR. Residues 31–41 show a composition bias toward polar residues; sequence TPATQNRNNFI. Composition is skewed to basic and acidic residues over residues 523–544 and 553–569; these read PPERSLSRKNSSNERSTRDETR and TAGRENSDIQNIEDKGN.

The protein belongs to the nucleoporin Nup133 family. In terms of assembly, part of the nuclear pore complex (NPC). The NPC has an eight-fold symmetrical structure comprising a central transport channel and two rings, the cytoplasmic and nuclear rings, to which eight filaments are attached. The cytoplasmic filaments have loose ends, while the nuclear filaments are joined in a distal ring, forming a nuclear basket. NPCs are highly dynamic in configuration and composition, and can be devided in 3 subcomplexes, the NUP62 subcomplex, the NUP107-160 subcomplex and the NUP93 subcomplex, containing approximately 30 different nucleoporin proteins.

It is found in the nucleus envelope. The protein resides in the nucleus. The protein localises to the nuclear pore complex. This is Nuclear pore complex protein NUP133 from Arabidopsis thaliana (Mouse-ear cress).